We begin with the raw amino-acid sequence, 53 residues long: Rubredoxin (53 aa).

In terms of domain architecture, Rubredoxin-like spans 1–52 (MAKWRCKICGYIYDEDEGDPDNGISPGTKFEDLPDDWVCPLCGAPKSEFERI). Residues Cys6, Cys9, Cys39, and Cys42 each contribute to the Fe cation site.

The protein belongs to the rubredoxin family. The cofactor is Fe(3+).

Its function is as follows. Rubredoxin is a small nonheme, iron protein lacking acid-labile sulfide. Its single Fe, chelated to 4 Cys, functions as an electron acceptor and may also stabilize the conformation of the molecule. This chain is Rubredoxin (rub), found in Pyrococcus abyssi (strain GE5 / Orsay).